The sequence spans 150 residues: D-aminoacyl-tRNA deacylase (150 aa).

The Gly-cisPro motif, important for rejection of L-amino acids signature appears at 138 to 139 (GP).

It belongs to the DTD family. In terms of assembly, homodimer.

It is found in the cytoplasm. The enzyme catalyses glycyl-tRNA(Ala) + H2O = tRNA(Ala) + glycine + H(+). It catalyses the reaction a D-aminoacyl-tRNA + H2O = a tRNA + a D-alpha-amino acid + H(+). Its function is as follows. An aminoacyl-tRNA editing enzyme that deacylates mischarged D-aminoacyl-tRNAs. Also deacylates mischarged glycyl-tRNA(Ala), protecting cells against glycine mischarging by AlaRS. Acts via tRNA-based rather than protein-based catalysis; rejects L-amino acids rather than detecting D-amino acids in the active site. By recycling D-aminoacyl-tRNA to D-amino acids and free tRNA molecules, this enzyme counteracts the toxicity associated with the formation of D-aminoacyl-tRNA entities in vivo and helps enforce protein L-homochirality. This is D-aminoacyl-tRNA deacylase from Bacteroides fragilis (strain YCH46).